Here is a 1235-residue protein sequence, read N- to C-terminus: Stress response protein NST1 (1235 aa).

Positions 1 to 19 (MPSNSKRSMAPPTNVSKQI) are enriched in polar residues. Disordered stretches follow at residues 1-210 (MPSN…AHKV), 300-369 (FENG…LEDA), 416-480 (RMQR…EQRM), 517-848 (EELE…IPAM), 904-987 (GHTS…NQQE), 1001-1023 (LDDSDIPLTAPPSQPLSSALPPG), and 1186-1235 (EPDN…TTGF). Residues 20–34 (SATSTSKKAPTKPTT) are compositionally biased toward low complexity. Over residues 35-52 (QNSIAGAKSTGSPETRTS) the composition is skewed to polar residues. Basic residues-rich tracts occupy residues 70–80 (NRKKQKRRQKQ) and 159–171 (RKGKKKKNRKSRS). Low complexity predominate over residues 179–189 (SSTSMSTPSAS). The span at 340–367 (LPDDDEDLDDDYDEDDEDDEPYSEDELE) shows a compositional bias: acidic residues. A compositionally biased stretch (low complexity) spans 426 to 437 (AAASAAHQSMHA). Over residues 445–475 (LDEEEYDDEEEEDYDSQDDEEYEEDEMDAMT) the composition is skewed to acidic residues. Positions 502–714 (AYREKIARER…QAAAVQAAKR (213 aa)) form a coiled coil. Composition is skewed to basic and acidic residues over residues 517–539 (EELEEENRLDVEREAKKAREAQK) and 549–697 (QAKE…REEQ). Low complexity predominate over residues 698-715 (AAQQAAAQAAAVQAAKRA). 4 stretches are compositionally biased toward polar residues: residues 759–772 (QPSQQGSHASSPRS), 779–794 (ISQTSSLSPGSVSTTI), 831–843 (PMQSLNGLPTNPG), and 924–959 (APQSSQNSGASLTHTRQPSISFERNQHETQPQSQPI). Residues 1188-1198 (DNNSISSSTRG) show a composition bias toward polar residues. The span at 1206–1221 (GSPVPGSSLPTPGSGS) shows a compositional bias: low complexity. A compositionally biased stretch (polar residues) spans 1222-1235 (RQFATTNISPTTGF).

It belongs to the NST1 family.

It localises to the cytoplasm. In terms of biological role, may act as a negative regulator of salt tolerance. This Coccidioides immitis (strain RS) (Valley fever fungus) protein is Stress response protein NST1 (NST1).